A 526-amino-acid polypeptide reads, in one-letter code: AAA ATPase forming ring-shaped complexes (526 aa).

The span at 1-18 (MGDMASSTDPAAHNSFSD) shows a compositional bias: polar residues. The segment at 1-20 (MGDMASSTDPAAHNSFSDFN) is disordered. The stretch at 20-59 (NREEMTRLADNVRSLQRTNQDLSARNTKLAEMLKSSRDKL) forms a coiled coil. Residue 257-262 (GCGKTL) participates in ATP binding.

It belongs to the AAA ATPase family. As to quaternary structure, homohexamer. Assembles into a hexameric ring structure.

The chain is AAA ATPase forming ring-shaped complexes from Corynebacterium efficiens (strain DSM 44549 / YS-314 / AJ 12310 / JCM 11189 / NBRC 100395).